A 241-amino-acid polypeptide reads, in one-letter code: Phosducin-like protein 2 (241 aa).

Residues 34 to 202 form the Phosducin domain; it reads VLRLQKEAMV…EWKLAEVGAI (169 aa). Residues 89–241 are thioredoxin fold; it reads FGELREISGN…DSSNSDNDTK (153 aa).

Belongs to the phosducin family. Interacts with the CCT chaperonin complex and actin. As to expression, testis-specific.

It is found in the endoplasmic reticulum. In terms of biological role, essential for male fertility, spermiogenesis and acrosome formation. The protein is Phosducin-like protein 2 (PDCL2) of Homo sapiens (Human).